Here is a 209-residue protein sequence, read N- to C-terminus: Large ribosomal subunit protein uL3 (209 aa).

Belongs to the universal ribosomal protein uL3 family. In terms of assembly, part of the 50S ribosomal subunit. Forms a cluster with proteins L14 and L19.

In terms of biological role, one of the primary rRNA binding proteins, it binds directly near the 3'-end of the 23S rRNA, where it nucleates assembly of the 50S subunit. In Clostridium tetani (strain Massachusetts / E88), this protein is Large ribosomal subunit protein uL3.